Here is a 316-residue protein sequence, read N- to C-terminus: Olfactory receptor 1N2 (316 aa).

The Extracellular portion of the chain corresponds to 1–28 (MGKPGRVNQTTVSDFLLLGLSEWPEEQP). An N-linked (GlcNAc...) asparagine glycan is attached at asparagine 8. A helical membrane pass occupies residues 29-49 (LLFGIFLGMYLVTMVGNLLII). Residues 50–60 (LAISSDPHLHT) are Cytoplasmic-facing. The chain crosses the membrane as a helical span at residues 61–81 (PMYFFLANLSLTDACFTSASI). The Extracellular segment spans residues 82 to 100 (PKMLANIHTQSQIISYSGC). Cysteine 100 and cysteine 182 are disulfide-bonded. Residues 101-121 (LAQLYFLLMFGGLDNCLLAVM) form a helical membrane-spanning segment. At 122-145 (AYDRYVAICQPLHYSTSMSPQLCA) the chain is on the cytoplasmic side. A helical transmembrane segment spans residues 146-166 (LMLGVCWVLTNCPALMHTLLL). The Extracellular segment spans residues 167 to 199 (TRVAFCAQKAIPHFYCDPSALLKLACSDTHVNE). A helical membrane pass occupies residues 200–220 (LMIITMGLLFLTVPLLLIVFS). Residues 221–243 (YVRIFWAVFVISSPGGRWKAFST) lie on the Cytoplasmic side of the membrane. Residues 244-264 (CGSHLTVVLLFYGSLMGVYLL) form a helical membrane-spanning segment. At 265–274 (PPSTYSTERE) the chain is on the extracellular side. Residues 275 to 295 (SRAAVLYMVIIPTLNPFIYSL) traverse the membrane as a helical segment. Residues 296 to 316 (RNRDMKEALGKLFVSGKTFFL) are Cytoplasmic-facing.

The protein belongs to the G-protein coupled receptor 1 family.

Its subcellular location is the membrane. Odorant receptor. In Homo sapiens (Human), this protein is Olfactory receptor 1N2 (OR1N2).